A 217-amino-acid chain; its full sequence is Probable transaldolase (217 aa).

Lysine 83 acts as the Schiff-base intermediate with substrate in catalysis.

This sequence belongs to the transaldolase family. Type 3B subfamily.

It is found in the cytoplasm. It carries out the reaction D-sedoheptulose 7-phosphate + D-glyceraldehyde 3-phosphate = D-erythrose 4-phosphate + beta-D-fructose 6-phosphate. Its pathway is carbohydrate degradation; pentose phosphate pathway; D-glyceraldehyde 3-phosphate and beta-D-fructose 6-phosphate from D-ribose 5-phosphate and D-xylulose 5-phosphate (non-oxidative stage): step 2/3. Functionally, transaldolase is important for the balance of metabolites in the pentose-phosphate pathway. This Erythrobacter litoralis (strain HTCC2594) protein is Probable transaldolase.